Reading from the N-terminus, the 61-residue chain is Small ribosomal subunit protein uS14 (61 aa).

4 residues coordinate Zn(2+): C24, C27, C40, and C43.

The protein belongs to the universal ribosomal protein uS14 family. Zinc-binding uS14 subfamily. Part of the 30S ribosomal subunit. Contacts proteins S3 and S10. Zn(2+) is required as a cofactor.

Functionally, binds 16S rRNA, required for the assembly of 30S particles and may also be responsible for determining the conformation of the 16S rRNA at the A site. This is Small ribosomal subunit protein uS14 from Caldanaerobacter subterraneus subsp. tengcongensis (strain DSM 15242 / JCM 11007 / NBRC 100824 / MB4) (Thermoanaerobacter tengcongensis).